A 337-amino-acid polypeptide reads, in one-letter code: Methylthioribose-1-phosphate isomerase (337 aa).

Residues 47-49 (RGA), Arg-81, and Gln-184 contribute to the substrate site. Asp-225 (proton donor) is an active-site residue. 235–236 (NK) contributes to the substrate binding site.

Belongs to the eIF-2B alpha/beta/delta subunits family. MtnA subfamily.

It catalyses the reaction 5-(methylsulfanyl)-alpha-D-ribose 1-phosphate = 5-(methylsulfanyl)-D-ribulose 1-phosphate. Its pathway is amino-acid biosynthesis; L-methionine biosynthesis via salvage pathway; L-methionine from S-methyl-5-thio-alpha-D-ribose 1-phosphate: step 1/6. Catalyzes the interconversion of methylthioribose-1-phosphate (MTR-1-P) into methylthioribulose-1-phosphate (MTRu-1-P). The chain is Methylthioribose-1-phosphate isomerase from Synechococcus sp. (strain CC9605).